Reading from the N-terminus, the 415-residue chain is Serine hydroxymethyltransferase (415 aa).

Residues Leu120 and Gly124 to Leu126 contribute to the (6S)-5,6,7,8-tetrahydrofolate site. Lys229 is modified (N6-(pyridoxal phosphate)lysine).

This sequence belongs to the SHMT family. In terms of assembly, homodimer. Pyridoxal 5'-phosphate is required as a cofactor.

The protein resides in the cytoplasm. It carries out the reaction (6R)-5,10-methylene-5,6,7,8-tetrahydrofolate + glycine + H2O = (6S)-5,6,7,8-tetrahydrofolate + L-serine. Its pathway is one-carbon metabolism; tetrahydrofolate interconversion. It functions in the pathway amino-acid biosynthesis; glycine biosynthesis; glycine from L-serine: step 1/1. Its function is as follows. Catalyzes the reversible interconversion of serine and glycine with tetrahydrofolate (THF) serving as the one-carbon carrier. This reaction serves as the major source of one-carbon groups required for the biosynthesis of purines, thymidylate, methionine, and other important biomolecules. Also exhibits THF-independent aldolase activity toward beta-hydroxyamino acids, producing glycine and aldehydes, via a retro-aldol mechanism. In Desulforudis audaxviator (strain MP104C), this protein is Serine hydroxymethyltransferase.